Consider the following 279-residue polypeptide: Energy-coupling factor transporter ATP-binding protein EcfA1 (279 aa).

One can recognise an ABC transporter domain in the interval 6–240 (VRLEHVFYKY…ADAMREIGLG (235 aa)). Residue 40–47 (GHNGSGKS) coordinates ATP.

This sequence belongs to the ABC transporter superfamily. Energy-coupling factor EcfA family. In terms of assembly, forms a stable energy-coupling factor (ECF) transporter complex composed of 2 membrane-embedded substrate-binding proteins (S component), 2 ATP-binding proteins (A component) and 2 transmembrane proteins (T component).

It is found in the cell membrane. Its function is as follows. ATP-binding (A) component of a common energy-coupling factor (ECF) ABC-transporter complex. Unlike classic ABC transporters this ECF transporter provides the energy necessary to transport a number of different substrates. This is Energy-coupling factor transporter ATP-binding protein EcfA1 from Listeria monocytogenes serovar 1/2a (strain ATCC BAA-679 / EGD-e).